We begin with the raw amino-acid sequence, 502 residues long: 4,4'-diapophytoene desaturase (4,4'-diaponeurosporene-forming) (502 aa).

Residue 5-17 coordinates FAD; that stretch reads VIGAGVTGLAAAA.

It belongs to the carotenoid/retinoid oxidoreductase family. CrtN subfamily.

It catalyses the reaction 15-cis-4,4'-diapophytoene + 3 FAD + 3 H(+) = all-trans-4,4'-diaponeurosporene + 3 FADH2. It participates in carotenoid biosynthesis; staphyloxanthin biosynthesis; staphyloxanthin from farnesyl diphosphate: step 2/5. In terms of biological role, involved in the biosynthesis of the yellow-orange carotenoid staphyloxanthin, which plays a role in the virulence via its protective function against oxidative stress. Catalyzes three successive dehydrogenation reactions that lead to the introduction of three double bonds into 4,4'-diapophytoene (dehydrosqualene), with 4,4'-diapophytofluene and 4,4'-diapo-zeta-carotene as intermediates, and 4,4'-diaponeurosporene (the major deep-yellow pigment in staphylococci strains) as the end product. In Staphylococcus aureus (strain MW2), this protein is 4,4'-diapophytoene desaturase (4,4'-diaponeurosporene-forming).